The primary structure comprises 322 residues: Cytochrome c biogenesis protein CcsA (322 aa).

A run of 8 helical transmembrane segments spans residues isoleucine 9–leucine 29, glycine 44–glycine 64, leucine 71–phenylalanine 91, phenylalanine 97–leucine 117, methionine 143–isoleucine 163, isoleucine 225–asparagine 245, tryptophan 254–isoleucine 274, and alanine 286–leucine 306.

The protein belongs to the CcmF/CycK/Ccl1/NrfE/CcsA family. As to quaternary structure, may interact with Ccs1.

The protein localises to the plastid. It is found in the chloroplast thylakoid membrane. Functionally, required during biogenesis of c-type cytochromes (cytochrome c6 and cytochrome f) at the step of heme attachment. In Manihot esculenta (Cassava), this protein is Cytochrome c biogenesis protein CcsA.